The chain runs to 221 residues: Octanoyltransferase (221 aa).

In terms of domain architecture, BPL/LPL catalytic spans 35–221 (ESYENRIIFC…RELLAALLSK (187 aa)). Residues 80-87 (RGGDITYH), 152-154 (AIG), and 165-167 (GLA) each bind substrate. Cys183 serves as the catalytic Acyl-thioester intermediate.

The protein belongs to the LipB family.

It is found in the cytoplasm. The enzyme catalyses octanoyl-[ACP] + L-lysyl-[protein] = N(6)-octanoyl-L-lysyl-[protein] + holo-[ACP] + H(+). It participates in protein modification; protein lipoylation via endogenous pathway; protein N(6)-(lipoyl)lysine from octanoyl-[acyl-carrier-protein]: step 1/2. Its function is as follows. Catalyzes the transfer of endogenously produced octanoic acid from octanoyl-acyl-carrier-protein onto the lipoyl domains of lipoate-dependent enzymes. Lipoyl-ACP can also act as a substrate although octanoyl-ACP is likely to be the physiological substrate. This Bacteroides fragilis (strain YCH46) protein is Octanoyltransferase.